A 51-amino-acid chain; its full sequence is ATP synthase F(1) complex subunit epsilon, mitochondrial (51 aa).

N6-acetyllysine; alternate occurs at positions 21, 32, and 37. N6-succinyllysine; alternate is present on residues lysine 21, lysine 32, and lysine 37. Residue lysine 44 is modified to N6-acetyllysine.

Belongs to the eukaryotic ATPase epsilon family. In terms of assembly, component of the ATP synthase complex composed at least of ATP5F1A/subunit alpha, ATP5F1B/subunit beta, ATP5MC1/subunit c (homooctomer), MT-ATP6/subunit a, MT-ATP8/subunit 8, ATP5ME/subunit e, ATP5MF/subunit f, ATP5MG/subunit g, ATP5MK/subunit k, ATP5MJ/subunit j, ATP5F1C/subunit gamma, ATP5F1D/subunit delta, ATP5F1E/subunit epsilon, ATP5PF/subunit F6, ATP5PB/subunit b, ATP5PD/subunit d, ATP5PO/subunit OSCP. ATP synthase complex consists of a soluble F(1) head domain (subunits alpha(3) and beta(3)) - the catalytic core - and a membrane F(0) domain - the membrane proton channel (subunits c, a, 8, e, f, g, k and j). These two domains are linked by a central stalk (subunits gamma, delta, and epsilon) rotating inside the F1 region and a stationary peripheral stalk (subunits F6, b, d, and OSCP).

It localises to the mitochondrion. The protein resides in the mitochondrion inner membrane. Subunit epsilon, of the mitochondrial membrane ATP synthase complex (F(1)F(0) ATP synthase or Complex V) that produces ATP from ADP in the presence of a proton gradient across the membrane which is generated by electron transport complexes of the respiratory chain. ATP synthase complex consist of a soluble F(1) head domain - the catalytic core - and a membrane F(1) domain - the membrane proton channel. These two domains are linked by a central stalk rotating inside the F(1) region and a stationary peripheral stalk. During catalysis, ATP synthesis in the catalytic domain of F(1) is coupled via a rotary mechanism of the central stalk subunits to proton translocation. In vivo, can only synthesize ATP although its ATP hydrolase activity can be activated artificially in vitro. May be essential for the assembly of F(1) and may play an important role in the incorporation of the hydrophobic subunit c into the F(1)-c oligomer rotor of the mitochondrial ATP synthase complex. The sequence is that of ATP synthase F(1) complex subunit epsilon, mitochondrial from Bos taurus (Bovine).